A 41-amino-acid polypeptide reads, in one-letter code: uncharacterized protein (41 aa).

This is an uncharacterized protein from Saccharomyces cerevisiae (strain ATCC 204508 / S288c) (Baker's yeast).